A 105-amino-acid polypeptide reads, in one-letter code: Large ribosomal subunit protein uL24 (105 aa).

This sequence belongs to the universal ribosomal protein uL24 family. As to quaternary structure, part of the 50S ribosomal subunit.

In terms of biological role, one of two assembly initiator proteins, it binds directly to the 5'-end of the 23S rRNA, where it nucleates assembly of the 50S subunit. Functionally, one of the proteins that surrounds the polypeptide exit tunnel on the outside of the subunit. In Methylococcus capsulatus (strain ATCC 33009 / NCIMB 11132 / Bath), this protein is Large ribosomal subunit protein uL24.